Consider the following 505-residue polypeptide: Light-independent protochlorophyllide reductase subunit B (505 aa).

Aspartate 36 serves as a coordination point for [4Fe-4S] cluster. Aspartate 291 (proton donor) is an active-site residue. Glycine 426 to methionine 427 serves as a coordination point for substrate.

Belongs to the ChlB/BchB/BchZ family. Protochlorophyllide reductase is composed of three subunits; ChlL, ChlN and ChlB. Forms a heterotetramer of two ChlB and two ChlN subunits. It depends on [4Fe-4S] cluster as a cofactor.

The enzyme catalyses chlorophyllide a + oxidized 2[4Fe-4S]-[ferredoxin] + 2 ADP + 2 phosphate = protochlorophyllide a + reduced 2[4Fe-4S]-[ferredoxin] + 2 ATP + 2 H2O. The protein operates within porphyrin-containing compound metabolism; chlorophyll biosynthesis (light-independent). In terms of biological role, component of the dark-operative protochlorophyllide reductase (DPOR) that uses Mg-ATP and reduced ferredoxin to reduce ring D of protochlorophyllide (Pchlide) to form chlorophyllide a (Chlide). This reaction is light-independent. The NB-protein (ChlN-ChlB) is the catalytic component of the complex. The protein is Light-independent protochlorophyllide reductase subunit B of Gloeobacter violaceus (strain ATCC 29082 / PCC 7421).